A 273-amino-acid chain; its full sequence is Dermonecrotic toxin LarSicTox-alphaVII1 (273 aa).

His-5 is a catalytic residue. Positions 25 and 27 each coordinate Mg(2+). Catalysis depends on His-41, which acts as the Nucleophile. 2 cysteine pairs are disulfide-bonded: Cys-45-Cys-51 and Cys-47-Cys-192. Residue Asp-85 participates in Mg(2+) binding.

It belongs to the arthropod phospholipase D family. Class II subfamily. Mg(2+) serves as cofactor. As to expression, expressed by the venom gland.

The protein localises to the secreted. The enzyme catalyses an N-(acyl)-sphingosylphosphocholine = an N-(acyl)-sphingosyl-1,3-cyclic phosphate + choline. The catalysed reaction is an N-(acyl)-sphingosylphosphoethanolamine = an N-(acyl)-sphingosyl-1,3-cyclic phosphate + ethanolamine. It catalyses the reaction a 1-acyl-sn-glycero-3-phosphocholine = a 1-acyl-sn-glycero-2,3-cyclic phosphate + choline. It carries out the reaction a 1-acyl-sn-glycero-3-phosphoethanolamine = a 1-acyl-sn-glycero-2,3-cyclic phosphate + ethanolamine. Its function is as follows. Dermonecrotic toxins cleave the phosphodiester linkage between the phosphate and headgroup of certain phospholipids (sphingolipid and lysolipid substrates), forming an alcohol (often choline) and a cyclic phosphate. This toxin acts on sphingomyelin (SM). It may also act on ceramide phosphoethanolamine (CPE), lysophosphatidylcholine (LPC) and lysophosphatidylethanolamine (LPE), but not on lysophosphatidylserine (LPS), and lysophosphatidylglycerol (LPG). It acts by transphosphatidylation, releasing exclusively cyclic phosphate products as second products. Induces dermonecrosis, hemolysis, increased vascular permeability, edema, inflammatory response, and platelet aggregation. The sequence is that of Dermonecrotic toxin LarSicTox-alphaVII1 from Loxosceles arizonica (Arizona brown spider).